A 39-amino-acid chain; its full sequence is RapF inhibitor (39 aa).

A propeptide spanning residues Met1 to Ala34 is cleaved from the precursor.

This sequence belongs to the Phr family. As to quaternary structure, interacts with RapF and inhibits its interaction with ComA. Contains a predicted signal peptide cleavage site in the N-terminal region, however the propeptide is probably subject to only one processing event, at the N-terminal end of the mature peptide.

It is found in the secreted. It localises to the cytoplasm. Signaling molecule involved in the regulation of genetic competence development. Secreted during production, but the mature peptide acts intracellularly, indicating that it needs to be imported into the cell to function. Stimulates expression of the genes controlled by ComA, a transcriptional factor that regulates the development of genetic competence. Acts by inhibiting RapF, which regulates the activity of ComA. The polypeptide is RapF inhibitor (phrF) (Bacillus subtilis (strain 168)).